The chain runs to 51 residues: MNIAKLLGVISFICWIVACVLTICIDASSVFSQALAQGMCAYLTFVLLSND.

2 helical membrane-spanning segments follow: residues 6-26 and 28-48; these read LLGV…ICID and SSVF…FVLL.

Its subcellular location is the host membrane. This is an uncharacterized protein from Enterobacteria phage T4 (Bacteriophage T4).